A 180-amino-acid polypeptide reads, in one-letter code: ATP synthase subunit delta (180 aa).

The protein belongs to the ATPase delta chain family. As to quaternary structure, F-type ATPases have 2 components, F(1) - the catalytic core - and F(0) - the membrane proton channel. F(1) has five subunits: alpha(3), beta(3), gamma(1), delta(1), epsilon(1). F(0) has three main subunits: a(1), b(2) and c(10-14). The alpha and beta chains form an alternating ring which encloses part of the gamma chain. F(1) is attached to F(0) by a central stalk formed by the gamma and epsilon chains, while a peripheral stalk is formed by the delta and b chains.

Its subcellular location is the cell inner membrane. Its function is as follows. F(1)F(0) ATP synthase produces ATP from ADP in the presence of a proton or sodium gradient. F-type ATPases consist of two structural domains, F(1) containing the extramembraneous catalytic core and F(0) containing the membrane proton channel, linked together by a central stalk and a peripheral stalk. During catalysis, ATP synthesis in the catalytic domain of F(1) is coupled via a rotary mechanism of the central stalk subunits to proton translocation. Functionally, this protein is part of the stalk that links CF(0) to CF(1). It either transmits conformational changes from CF(0) to CF(1) or is implicated in proton conduction. The polypeptide is ATP synthase subunit delta (Geotalea uraniireducens (strain Rf4) (Geobacter uraniireducens)).